Consider the following 427-residue polypeptide: Mannosylglucosylglycerate synthase (427 aa).

The protein belongs to the glycosyltransferase group 1 family. Co(2+) serves as cofactor. Mg(2+) is required as a cofactor. The cofactor is Mn(2+). It depends on Ni(2+) as a cofactor.

The enzyme catalyses (2R)-2-O-(alpha-D-glucopyranosyl)-glycerate + GDP-alpha-D-mannose = (2R)-2-O-[alpha-D-mannopyranosyl-(1-&gt;2)-alpha-D-glucopyranosyl]-glycerate + GDP + H(+). Its function is as follows. Catalyzes the synthesis of mannosylglucosylglycerate (MGG) from glucosylglycerate (GG) and GDP-mannose. The chain is Mannosylglucosylglycerate synthase from Thermotoga maritima (strain ATCC 43589 / DSM 3109 / JCM 10099 / NBRC 100826 / MSB8).